A 478-amino-acid chain; its full sequence is Protein nucleotidyltransferase YdiU (478 aa).

8 residues coordinate ATP: glycine 84, glycine 86, arginine 87, lysine 107, aspartate 119, glycine 120, arginine 170, and arginine 177. Aspartate 246 acts as the Proton acceptor in catalysis. Asparagine 247 and aspartate 256 together coordinate Mg(2+). Residue aspartate 256 coordinates ATP.

Belongs to the SELO family. Mg(2+) serves as cofactor. Requires Mn(2+) as cofactor.

It carries out the reaction L-seryl-[protein] + ATP = 3-O-(5'-adenylyl)-L-seryl-[protein] + diphosphate. The catalysed reaction is L-threonyl-[protein] + ATP = 3-O-(5'-adenylyl)-L-threonyl-[protein] + diphosphate. It catalyses the reaction L-tyrosyl-[protein] + ATP = O-(5'-adenylyl)-L-tyrosyl-[protein] + diphosphate. The enzyme catalyses L-histidyl-[protein] + UTP = N(tele)-(5'-uridylyl)-L-histidyl-[protein] + diphosphate. It carries out the reaction L-seryl-[protein] + UTP = O-(5'-uridylyl)-L-seryl-[protein] + diphosphate. The catalysed reaction is L-tyrosyl-[protein] + UTP = O-(5'-uridylyl)-L-tyrosyl-[protein] + diphosphate. Its function is as follows. Nucleotidyltransferase involved in the post-translational modification of proteins. It can catalyze the addition of adenosine monophosphate (AMP) or uridine monophosphate (UMP) to a protein, resulting in modifications known as AMPylation and UMPylation. This Escherichia coli O6:K15:H31 (strain 536 / UPEC) protein is Protein nucleotidyltransferase YdiU.